The primary structure comprises 346 residues: Inositol 2-dehydrogenase/D-chiro-inositol 3-dehydrogenase (346 aa).

The segment covering 322–331 (GREESIELPK) has biased composition (basic and acidic residues). The disordered stretch occupies residues 322–346 (GREESIELPKKPAFYQHSAATPEQV).

Belongs to the Gfo/Idh/MocA family. In terms of assembly, homotetramer.

The catalysed reaction is myo-inositol + NAD(+) = scyllo-inosose + NADH + H(+). It catalyses the reaction 1D-chiro-inositol + NAD(+) = scyllo-inosine + NADH + H(+). It functions in the pathway polyol metabolism; myo-inositol degradation into acetyl-CoA; acetyl-CoA from myo-inositol: step 1/7. In terms of biological role, involved in the oxidation of myo-inositol (MI) and D-chiro-inositol (DCI) to 2-keto-myo-inositol (2KMI or 2-inosose) and 1-keto-D-chiro-inositol (1KDCI), respectively. This Shouchella clausii (strain KSM-K16) (Alkalihalobacillus clausii) protein is Inositol 2-dehydrogenase/D-chiro-inositol 3-dehydrogenase.